We begin with the raw amino-acid sequence, 1023 residues long: Probable beta-glucosidase E (1023 aa).

The interval 1 to 51 is disordered; sequence MPKSYTPVHDSIPEEDHFSSDDESNFRLHRIDRSASRSQSPKENEGEPSIL. The Cytoplasmic segment spans residues 1 to 128; it reads MPKSYTPVHD…AVYYSKTWWR (128 aa). Residues 11–45 show a composition bias toward basic and acidic residues; that stretch reads SIPEEDHFSSDDESNFRLHRIDRSASRSQSPKENE. Residues 129 to 149 form a helical; Signal-anchor for type II membrane protein membrane-spanning segment; it reads TLVVVIIALGLLVWGFLKYAS. Residues 150-1023 lie on the Extracellular side of the membrane; sequence TRGDIWEEYD…NLPLGKPFDP (874 aa). N-linked (GlcNAc...) asparagine glycans are attached at residues asparagine 199 and asparagine 387. Residue aspartate 415 is part of the active site. N-linked (GlcNAc...) asparagine glycans are attached at residues asparagine 458 and asparagine 497. Disordered stretches follow at residues 485 to 515 and 822 to 841; these read WESPAPDGDGGPNFSSWTDDEFGFRYPGSPG and NPSRLPAARPPDAVAPPSYD. Residues 827-838 show a composition bias toward low complexity; the sequence is PAARPPDAVAPP. An N-linked (GlcNAc...) asparagine glycan is attached at asparagine 848. Residues 873–909 are disordered; that stretch reads ATTPPPPNPEASGSATDQKPHRTKPSDAGGGAGGNPS. Asparagine 964 and asparagine 979 each carry an N-linked (GlcNAc...) asparagine glycan.

This sequence belongs to the glycosyl hydrolase 3 family.

It localises to the cell membrane. It catalyses the reaction Hydrolysis of terminal, non-reducing beta-D-glucosyl residues with release of beta-D-glucose.. It functions in the pathway glycan metabolism; cellulose degradation. Its function is as follows. Beta-glucosidases are one of a number of cellulolytic enzymes involved in the degradation of cellulosic biomass. Catalyzes the last step releasing glucose from the inhibitory cellobiose. In Emericella nidulans (strain FGSC A4 / ATCC 38163 / CBS 112.46 / NRRL 194 / M139) (Aspergillus nidulans), this protein is Probable beta-glucosidase E (bglE).